Here is a 24-residue protein sequence, read N- to C-terminus: Alpha-lactalbumin (24 aa).

This sequence belongs to the glycosyl hydrolase 22 family. In terms of assembly, lactose synthase (LS) is a heterodimer of a catalytic component, beta1,4-galactosyltransferase (beta4Gal-T1) and a regulatory component, alpha-lactalbumin (LA). Glycosylated (50% of the proteins). In terms of tissue distribution, mammary gland specific. Secreted in milk.

It localises to the secreted. Its function is as follows. Regulatory subunit of lactose synthase, changes the substrate specificity of galactosyltransferase in the mammary gland making glucose a good acceptor substrate for this enzyme. This enables LS to synthesize lactose, the major carbohydrate component of milk. In other tissues, galactosyltransferase transfers galactose onto the N-acetylglucosamine of the oligosaccharide chains in glycoproteins. The sequence is that of Alpha-lactalbumin (LALBA) from Felis catus (Cat).